We begin with the raw amino-acid sequence, 617 residues long: Membrane protein insertase YidC (617 aa).

Residues 8-28 (MFVAIGLSLLVLLGWQYFVAG) form a helical membrane-spanning segment. The segment covering 36-49 (QIEAQNKAAQQQPP) has biased composition (polar residues). Residues 36–91 (QIEAQNKAAQQQPPGVTPDGVPSPSPKEGGPAAPAPGTLPTAQGGPVSREAALARS) are disordered. A compositionally biased stretch (low complexity) spans 61-81 (PKEGGPAAPAPGTLPTAQGGP). Transmembrane regions (helical) follow at residues 387–407 (LFGN…LLFL), 461–481 (WPVL…FITI), 517–533 (FVHL…TMFV), and 549–569 (IFTF…AGLV).

The protein belongs to the OXA1/ALB3/YidC family. Type 1 subfamily. As to quaternary structure, interacts with the Sec translocase complex via SecD. Specifically interacts with transmembrane segments of nascent integral membrane proteins during membrane integration.

It localises to the cell inner membrane. Its function is as follows. Required for the insertion and/or proper folding and/or complex formation of integral membrane proteins into the membrane. Involved in integration of membrane proteins that insert both dependently and independently of the Sec translocase complex, as well as at least some lipoproteins. Aids folding of multispanning membrane proteins. This is Membrane protein insertase YidC from Methylobacterium radiotolerans (strain ATCC 27329 / DSM 1819 / JCM 2831 / NBRC 15690 / NCIMB 10815 / 0-1).